Consider the following 280-residue polypeptide: Phosphatidylglycerol--prolipoprotein diacylglyceryl transferase (280 aa).

The next 3 helical transmembrane spans lie at 15–35 (IFSI…IFAL), 60–80 (FIGL…PVFF), and 90–110 (IWEG…VLLF). An a 1,2-diacyl-sn-glycero-3-phospho-(1'-sn-glycerol)-binding site is contributed by Arg138. 2 consecutive transmembrane segments (helical) span residues 217 to 237 (MPFG…RIFL) and 257 to 277 (GQLL…NIYV).

The protein belongs to the Lgt family.

It is found in the cell membrane. It catalyses the reaction L-cysteinyl-[prolipoprotein] + a 1,2-diacyl-sn-glycero-3-phospho-(1'-sn-glycerol) = an S-1,2-diacyl-sn-glyceryl-L-cysteinyl-[prolipoprotein] + sn-glycerol 1-phosphate + H(+). The protein operates within protein modification; lipoprotein biosynthesis (diacylglyceryl transfer). Functionally, catalyzes the transfer of the diacylglyceryl group from phosphatidylglycerol to the sulfhydryl group of the N-terminal cysteine of a prolipoprotein, the first step in the formation of mature lipoproteins. In Buchnera aphidicola subsp. Baizongia pistaciae (strain Bp), this protein is Phosphatidylglycerol--prolipoprotein diacylglyceryl transferase.